We begin with the raw amino-acid sequence, 600 residues long: Pyranose dehydrogenase 2 (600 aa).

The N-terminal stretch at 1–25 is a signal peptide; the sequence is MLSRVAKLNSRLVSLALLGSQIAFG. Residues Asn99 and Asn114 are each glycosylated (N-linked (GlcNAc...) asparagine). Tele-8alpha-FAD histidine is present on His127. 3 N-linked (GlcNAc...) asparagine glycosylation sites follow: Asn199, Asn275, and Asn342. His535 acts as the Proton acceptor in catalysis. His579 is an active-site residue.

The protein belongs to the GMC oxidoreductase family. In terms of assembly, monomer. The cofactor is FAD. In terms of processing, N-glycosylated.

The protein localises to the secreted. It carries out the reaction pyranose + acceptor = pyranos-2-ulose + reduced acceptor.. It catalyses the reaction pyranose + acceptor = pyranos-3-ulose + reduced acceptor.. The catalysed reaction is pyranose + acceptor = pyranos-2,3-diulose + reduced acceptor.. The enzyme catalyses a pyranoside + acceptor = a pyranosid-3-ulose + reduced acceptor.. It carries out the reaction a pyranoside + acceptor = a pyranosid-3,4-diulose + reduced acceptor.. Catalyzes the single-oxidation or sequential double oxidation reaction of carbohydrates primarily at carbon-2 and/or carbon-3 with the concomitant reduction of the flavin. The enzyme exhibits a broad sugar substrate specificity, oxidizing different aldopyranoses to the corresponding C-1, C-2, C-3 or C-1,2, C-2,3 and C-3,4 (di)dehydro sugars with substrate-specific regioselectivity. Accepts only a narrow range of electron acceptors such as substituted benzoquinones and complexed metal ions and reacts extremely slowly with O(2) as acceptor. May play a role in the natural recycling of plant matter by oxidizing all major monosaccharides in lignocellulose and by reducing quinone compounds or reactive radical species generated during lignin depolymerization. The sequence is that of Pyranose dehydrogenase 2 from Leucoagaricus meleagris (Western flat-topped agaric).